Consider the following 504-residue polypeptide: Protein nucleotidyltransferase YdiU (504 aa).

ATP-binding residues include Gly99, Gly101, Arg102, Lys122, Asp134, Gly135, Arg185, and Arg192. Asp261 functions as the Proton acceptor in the catalytic mechanism. Asn262 and Asp271 together coordinate Mg(2+). Residue Asp271 coordinates ATP.

The protein belongs to the SELO family. Requires Mg(2+) as cofactor. The cofactor is Mn(2+).

The enzyme catalyses L-seryl-[protein] + ATP = 3-O-(5'-adenylyl)-L-seryl-[protein] + diphosphate. It carries out the reaction L-threonyl-[protein] + ATP = 3-O-(5'-adenylyl)-L-threonyl-[protein] + diphosphate. It catalyses the reaction L-tyrosyl-[protein] + ATP = O-(5'-adenylyl)-L-tyrosyl-[protein] + diphosphate. The catalysed reaction is L-histidyl-[protein] + UTP = N(tele)-(5'-uridylyl)-L-histidyl-[protein] + diphosphate. The enzyme catalyses L-seryl-[protein] + UTP = O-(5'-uridylyl)-L-seryl-[protein] + diphosphate. It carries out the reaction L-tyrosyl-[protein] + UTP = O-(5'-uridylyl)-L-tyrosyl-[protein] + diphosphate. Its function is as follows. Nucleotidyltransferase involved in the post-translational modification of proteins. It can catalyze the addition of adenosine monophosphate (AMP) or uridine monophosphate (UMP) to a protein, resulting in modifications known as AMPylation and UMPylation. The chain is Protein nucleotidyltransferase YdiU from Methylococcus capsulatus (strain ATCC 33009 / NCIMB 11132 / Bath).